A 477-amino-acid polypeptide reads, in one-letter code: Iroquois homeobox protein 6a (477 aa).

Residues 148–210 (GSTRRKNATR…NARRRLKKEN (63 aa)) constitute a DNA-binding region (homeobox). Disordered regions lie at residues 209 to 282 (ENKM…PDIP) and 303 to 323 (DYLD…QSTS). The segment covering 219–237 (KAGDDRKEDLDSKDSKDEQ) has biased composition (basic and acidic residues). Residues 243-253 (DLDDMEDEDCD) are compositionally biased toward acidic residues. A compositionally biased stretch (basic and acidic residues) spans 254 to 264 (KLDSDCEKSGQ). Residues 310 to 321 (SKPQQQQPSPQS) are compositionally biased toward low complexity.

Belongs to the TALE/IRO homeobox family.

It is found in the nucleus. Transcription factor. Binds to the iroquois binding site (IBS) motif of target genes to regulate gene expression; functions as a transcriptional activator or repressor. In concert with irx5a, plays a role in visual performance. This chain is Iroquois homeobox protein 6a, found in Danio rerio (Zebrafish).